The following is a 223-amino-acid chain: Deoxyribose-phosphate aldolase (223 aa).

D91 acts as the Proton donor/acceptor in catalysis. K154 serves as the catalytic Schiff-base intermediate with acetaldehyde. K183 functions as the Proton donor/acceptor in the catalytic mechanism.

Belongs to the DeoC/FbaB aldolase family. DeoC type 1 subfamily.

Its subcellular location is the cytoplasm. It carries out the reaction 2-deoxy-D-ribose 5-phosphate = D-glyceraldehyde 3-phosphate + acetaldehyde. It functions in the pathway carbohydrate degradation; 2-deoxy-D-ribose 1-phosphate degradation; D-glyceraldehyde 3-phosphate and acetaldehyde from 2-deoxy-alpha-D-ribose 1-phosphate: step 2/2. Functionally, catalyzes a reversible aldol reaction between acetaldehyde and D-glyceraldehyde 3-phosphate to generate 2-deoxy-D-ribose 5-phosphate. This Lysinibacillus sphaericus (strain C3-41) protein is Deoxyribose-phosphate aldolase.